The following is a 480-amino-acid chain: Glutamate--tRNA ligase (480 aa).

Residues 21 to 31 carry the 'HIGH' region motif; the sequence is PSPTGYLHVGG. The Zn(2+) site is built by C110, C112, C137, and H139. A 'KMSKS' region motif is present at residues 248–252; sequence KLSKR. K251 lines the ATP pocket.

It belongs to the class-I aminoacyl-tRNA synthetase family. Glutamate--tRNA ligase type 1 subfamily. In terms of assembly, monomer. Zn(2+) is required as a cofactor.

The protein resides in the cytoplasm. The enzyme catalyses tRNA(Glu) + L-glutamate + ATP = L-glutamyl-tRNA(Glu) + AMP + diphosphate. Functionally, catalyzes the attachment of glutamate to tRNA(Glu) in a two-step reaction: glutamate is first activated by ATP to form Glu-AMP and then transferred to the acceptor end of tRNA(Glu). This Mannheimia succiniciproducens (strain KCTC 0769BP / MBEL55E) protein is Glutamate--tRNA ligase.